The sequence spans 410 residues: Lipoyl synthase, mitochondrial (410 aa).

Residues Cys125, Cys130, Cys136, Cys157, Cys161, Cys164, and Ser373 each contribute to the [4Fe-4S] cluster site. The Radical SAM core domain occupies 140-362 (SDEEGTATAT…EKEAMDMGFL (223 aa)).

This sequence belongs to the radical SAM superfamily. Lipoyl synthase family. [4Fe-4S] cluster serves as cofactor.

It is found in the mitochondrion. The enzyme catalyses [[Fe-S] cluster scaffold protein carrying a second [4Fe-4S](2+) cluster] + N(6)-octanoyl-L-lysyl-[protein] + 2 oxidized [2Fe-2S]-[ferredoxin] + 2 S-adenosyl-L-methionine + 4 H(+) = [[Fe-S] cluster scaffold protein] + N(6)-[(R)-dihydrolipoyl]-L-lysyl-[protein] + 4 Fe(3+) + 2 hydrogen sulfide + 2 5'-deoxyadenosine + 2 L-methionine + 2 reduced [2Fe-2S]-[ferredoxin]. Its pathway is protein modification; protein lipoylation via endogenous pathway; protein N(6)-(lipoyl)lysine from octanoyl-[acyl-carrier-protein]: step 2/2. Functionally, catalyzes the radical-mediated insertion of two sulfur atoms into the C-6 and C-8 positions of the octanoyl moiety bound to the lipoyl domains of lipoate-dependent enzymes, thereby converting the octanoylated domains into lipoylated derivatives. The chain is Lipoyl synthase, mitochondrial from Leishmania major.